Consider the following 327-residue polypeptide: Methionyl-tRNA formyltransferase (327 aa).

121-124 (SLLP) contributes to the (6S)-5,6,7,8-tetrahydrofolate binding site.

Belongs to the Fmt family.

It carries out the reaction L-methionyl-tRNA(fMet) + (6R)-10-formyltetrahydrofolate = N-formyl-L-methionyl-tRNA(fMet) + (6S)-5,6,7,8-tetrahydrofolate + H(+). In terms of biological role, attaches a formyl group to the free amino group of methionyl-tRNA(fMet). The formyl group appears to play a dual role in the initiator identity of N-formylmethionyl-tRNA by promoting its recognition by IF2 and preventing the misappropriation of this tRNA by the elongation apparatus. The protein is Methionyl-tRNA formyltransferase of Burkholderia pseudomallei (strain 1106a).